The sequence spans 328 residues: Endochitinase (328 aa).

The signal sequence occupies residues 1–26 (MRRHKEVNFVAYLLFSLLVLVSAALA). A Chitin-binding type-1 domain is found at 27–68 (QNCGSQGGGKACASGQCCSKFGWCGNTNDYCGSGNCQSQCPG). 7 disulfides stabilise this stretch: cysteine 29–cysteine 44, cysteine 38–cysteine 50, cysteine 43–cysteine 57, cysteine 62–cysteine 66, cysteine 100–cysteine 162, cysteine 174–cysteine 182, and cysteine 281–cysteine 313. Glutamate 144 acts as the Proton donor in catalysis. Residues 322 to 328 (ALLVDTL) constitute a propeptide, removed in mature form.

Belongs to the glycosyl hydrolase 19 family. Chitinase class I subfamily.

It is found in the vacuole. The enzyme catalyses Random endo-hydrolysis of N-acetyl-beta-D-glucosaminide (1-&gt;4)-beta-linkages in chitin and chitodextrins.. Defense against chitin-containing fungal pathogens. The chain is Endochitinase from Solanum tuberosum (Potato).